A 414-amino-acid chain; its full sequence is Serine hydroxymethyltransferase (414 aa).

Residues leucine 121 and 125–127 each bind (6S)-5,6,7,8-tetrahydrofolate; that span reads GHL. Lysine 229 is modified (N6-(pyridoxal phosphate)lysine).

The protein belongs to the SHMT family. In terms of assembly, homodimer. The cofactor is pyridoxal 5'-phosphate.

The protein localises to the cytoplasm. The catalysed reaction is (6R)-5,10-methylene-5,6,7,8-tetrahydrofolate + glycine + H2O = (6S)-5,6,7,8-tetrahydrofolate + L-serine. Its pathway is one-carbon metabolism; tetrahydrofolate interconversion. It participates in amino-acid biosynthesis; glycine biosynthesis; glycine from L-serine: step 1/1. Its function is as follows. Catalyzes the reversible interconversion of serine and glycine with tetrahydrofolate (THF) serving as the one-carbon carrier. This reaction serves as the major source of one-carbon groups required for the biosynthesis of purines, thymidylate, methionine, and other important biomolecules. Also exhibits THF-independent aldolase activity toward beta-hydroxyamino acids, producing glycine and aldehydes, via a retro-aldol mechanism. The protein is Serine hydroxymethyltransferase of Paracidovorax citrulli (strain AAC00-1) (Acidovorax citrulli).